Consider the following 208-residue polypeptide: Probable nicotinate-nucleotide adenylyltransferase (208 aa).

Belongs to the NadD family.

It catalyses the reaction nicotinate beta-D-ribonucleotide + ATP + H(+) = deamido-NAD(+) + diphosphate. Its pathway is cofactor biosynthesis; NAD(+) biosynthesis; deamido-NAD(+) from nicotinate D-ribonucleotide: step 1/1. Catalyzes the reversible adenylation of nicotinate mononucleotide (NaMN) to nicotinic acid adenine dinucleotide (NaAD). This chain is Probable nicotinate-nucleotide adenylyltransferase, found in Trichormus variabilis (strain ATCC 29413 / PCC 7937) (Anabaena variabilis).